A 362-amino-acid chain; its full sequence is Chorismate synthase (362 aa).

NADP(+) is bound at residue Arg-48. Residues 131–133, 243–244, Gly-288, 303–307, and Arg-329 contribute to the FMN site; these read RAS, NA, and KPTSS.

This sequence belongs to the chorismate synthase family. In terms of assembly, homotetramer. The cofactor is FMNH2.

It carries out the reaction 5-O-(1-carboxyvinyl)-3-phosphoshikimate = chorismate + phosphate. Its pathway is metabolic intermediate biosynthesis; chorismate biosynthesis; chorismate from D-erythrose 4-phosphate and phosphoenolpyruvate: step 7/7. In terms of biological role, catalyzes the anti-1,4-elimination of the C-3 phosphate and the C-6 proR hydrogen from 5-enolpyruvylshikimate-3-phosphate (EPSP) to yield chorismate, which is the branch point compound that serves as the starting substrate for the three terminal pathways of aromatic amino acid biosynthesis. This reaction introduces a second double bond into the aromatic ring system. This chain is Chorismate synthase, found in Bartonella tribocorum (strain CIP 105476 / IBS 506).